Reading from the N-terminus, the 362-residue chain is Glutamate 5-kinase (362 aa).

ATP is bound at residue lysine 3. Residues serine 43, aspartate 128, and asparagine 140 each contribute to the substrate site. Residues 160–161 and 202–208 each bind ATP; these read TD and TGGMRTK. One can recognise a PUA domain in the interval 267–348; the sequence is PGTILIDAGA…REIEPILGYS (82 aa).

This sequence belongs to the glutamate 5-kinase family.

It localises to the cytoplasm. The enzyme catalyses L-glutamate + ATP = L-glutamyl 5-phosphate + ADP. The protein operates within amino-acid biosynthesis; L-proline biosynthesis; L-glutamate 5-semialdehyde from L-glutamate: step 1/2. In terms of biological role, catalyzes the transfer of a phosphate group to glutamate to form L-glutamate 5-phosphate. This is Glutamate 5-kinase from Xanthomonas campestris pv. campestris (strain 8004).